The sequence spans 144 residues: MRLNTLSPAEGAKHSAKRLGRGIGSGLGKTGGRGHKGQKSRTGGGVRRGFEGGQMPLYRRLPKFGFTSMKSAVTAEVRLNELTKVEGNVVTLETLKAANILTKDIQFAKVILAGEVKSAVTVRGLRVTKGAKAAIEAAGGSIEE.

The disordered stretch occupies residues 1-53; sequence MRLNTLSPAEGAKHSAKRLGRGIGSGLGKTGGRGHKGQKSRTGGGVRRGFEGG. Positions 21–31 are enriched in gly residues; it reads RGIGSGLGKTG.

Belongs to the universal ribosomal protein uL15 family. As to quaternary structure, part of the 50S ribosomal subunit.

Its function is as follows. Binds to the 23S rRNA. The sequence is that of Large ribosomal subunit protein uL15 from Haemophilus influenzae (strain ATCC 51907 / DSM 11121 / KW20 / Rd).